A 237-amino-acid chain; its full sequence is Carboxy-S-adenosyl-L-methionine synthase (237 aa).

Residues tyrosine 40, 65–67, 116–117, asparagine 131, and arginine 194 each bind S-adenosyl-L-methionine; these read GCS and DI.

The protein belongs to the class I-like SAM-binding methyltransferase superfamily. Cx-SAM synthase family. Homodimer.

It catalyses the reaction prephenate + S-adenosyl-L-methionine = carboxy-S-adenosyl-L-methionine + 3-phenylpyruvate + H2O. Catalyzes the conversion of S-adenosyl-L-methionine (SAM) to carboxy-S-adenosyl-L-methionine (Cx-SAM). The protein is Carboxy-S-adenosyl-L-methionine synthase of Dichelobacter nodosus (strain VCS1703A).